The sequence spans 320 residues: Methenyltetrahydromethanopterin cyclohydrolase (320 aa).

The protein belongs to the MCH family.

It localises to the cytoplasm. It carries out the reaction 5,10-methenyl-5,6,7,8-tetrahydromethanopterin + H2O = N(5)-formyl-5,6,7,8-tetrahydromethanopterin + H(+). Its function is as follows. Catalyzes the hydrolysis of methenyl-H(4)MPT(+) to 5-formyl-H(4)MPT. The protein is Methenyltetrahydromethanopterin cyclohydrolase of Methanococcoides burtonii (strain DSM 6242 / NBRC 107633 / OCM 468 / ACE-M).